The chain runs to 233 residues: Protein Atu3128 (233 aa).

This sequence belongs to the glycosyl hydrolase 88 family.

Functionally, seems to regulate the surface properties of the bacterium in the presence of plant cells or plant cell extracts. Mutations in this protein are responsible for an increased aggregation of the bacteria in the presence of pea root cap cells. The chain is Protein Atu3128 from Agrobacterium fabrum (strain C58 / ATCC 33970) (Agrobacterium tumefaciens (strain C58)).